We begin with the raw amino-acid sequence, 427 residues long: MAIILKNGKSFNKDGVIERTELKIENGFITAIGSKLHSEEADEVIDVQGKLISAGFIDLHVHLREPGGEAKETIATGTLAAAKGGFTTVAAMPNTRPVPDTKEQMEWLCKRIRETAYVHVLPYAAITVGQQGTELTDFAALKEAGAFAFTDDGVGVQSAGMMYEAMKRAAALDMAIVAHCEDNTLANRGVVHDGEFAHRYGLYGIPSVCESVHIARDVLLAEATGCHYHVCHISTKESVRVVRDAKRAGIRVTAEVTPHHLLLCDEDIPGPDANYKMNPPLRSKEDREALIEGLLDGTIDFIATDHAPHTEAEKQKGINAAPFGIVGLETAFPLLYTHLVETNILTLKQLIDLLTVKPAECFGLPLGKLAVGERADITIIDLETEEAIDPQTFVSRGKNTPFAGWKCKGWPVMTFVGGKLVWQKGRE.

The Zn(2+) site is built by His60 and His62. Substrate-binding positions include 62 to 64 and Asn94; that span reads HLR. Asp152, His179, and His232 together coordinate Zn(2+). Asn278 serves as a coordination point for substrate. Asp305 lines the Zn(2+) pocket. The active site involves Asp305. Substrate contacts are provided by residues His309 and 323–324; that span reads FG.

It belongs to the metallo-dependent hydrolases superfamily. DHOase family. Class I DHOase subfamily. The cofactor is Zn(2+).

It catalyses the reaction (S)-dihydroorotate + H2O = N-carbamoyl-L-aspartate + H(+). It participates in pyrimidine metabolism; UMP biosynthesis via de novo pathway; (S)-dihydroorotate from bicarbonate: step 3/3. Catalyzes the reversible cyclization of carbamoyl aspartate to dihydroorotate. The polypeptide is Dihydroorotase (Geobacillus sp. (strain WCH70)).